The following is a 318-amino-acid chain: Aldehyde oxidoreductase FAD-binding subunit PaoB (318 aa).

The FAD-binding PCMH-type domain maps to 1 to 223 (MKAFTYERVN…VAVTLPPPLG (223 aa)). FAD contacts are provided by residues 26–34 (KFIAGGTNL) and Thr108. [4Fe-4S] cluster-binding residues include Cys119, Cys129, Cys138, and Cys157. FAD-binding residues include Asp164, Ile213, and Lys230.

Heterotrimer composed of PaoA, PaoB and PaoC. It depends on FAD as a cofactor. Requires [4Fe-4S] cluster as cofactor.

The protein resides in the periplasm. The catalysed reaction is an aldehyde + A + H2O = a carboxylate + AH2 + H(+). The complex requires PaoD for activity. In terms of biological role, oxidizes aldehydes to the corresponding carboxylic acids with a preference for aromatic aldehydes. It might play a role in the detoxification of aldehydes to avoid cell damage. The sequence is that of Aldehyde oxidoreductase FAD-binding subunit PaoB from Escherichia coli (strain K12).